The primary structure comprises 288 residues: Quinate/shikimate dehydrogenase (288 aa).

Substrate-binding residues include Lys-71 and Asp-107. NAD(+)-binding positions include 132-135, 155-158, Lys-205, 232-235, and Gly-255; these read AGGA, NRRD, and CVYN.

It belongs to the shikimate dehydrogenase family. In terms of assembly, homodimer.

The catalysed reaction is L-quinate + NAD(+) = 3-dehydroquinate + NADH + H(+). It carries out the reaction L-quinate + NADP(+) = 3-dehydroquinate + NADPH + H(+). The enzyme catalyses shikimate + NADP(+) = 3-dehydroshikimate + NADPH + H(+). It catalyses the reaction shikimate + NAD(+) = 3-dehydroshikimate + NADH + H(+). Its pathway is metabolic intermediate biosynthesis; chorismate biosynthesis; chorismate from D-erythrose 4-phosphate and phosphoenolpyruvate: step 4/7. The actual biological function of YdiB remains unclear, nor is it known whether 3-dehydroshikimate or quinate represents the natural substrate. Catalyzes the reversible NAD-dependent reduction of both 3-dehydroshikimate (DHSA) and 3-dehydroquinate to yield shikimate (SA) and quinate, respectively. It can use both NAD or NADP for catalysis, however it has higher catalytic efficiency with NAD. The protein is Quinate/shikimate dehydrogenase of Escherichia coli O139:H28 (strain E24377A / ETEC).